Consider the following 403-residue polypeptide: NADH-quinone oxidoreductase subunit D (403 aa).

This sequence belongs to the complex I 49 kDa subunit family. As to quaternary structure, NDH-1 is composed of 14 different subunits. Subunits NuoB, C, D, E, F, and G constitute the peripheral sector of the complex.

Its subcellular location is the cell membrane. It catalyses the reaction a quinone + NADH + 5 H(+)(in) = a quinol + NAD(+) + 4 H(+)(out). In terms of biological role, NDH-1 shuttles electrons from NADH, via FMN and iron-sulfur (Fe-S) centers, to quinones in the respiratory chain. The immediate electron acceptor for the enzyme in this species is believed to be a menaquinone. Couples the redox reaction to proton translocation (for every two electrons transferred, four hydrogen ions are translocated across the cytoplasmic membrane), and thus conserves the redox energy in a proton gradient. In Amoebophilus asiaticus (strain 5a2), this protein is NADH-quinone oxidoreductase subunit D.